Reading from the N-terminus, the 425-residue chain is Serine--tRNA ligase (425 aa).

Residue 230-232 (TAE) participates in L-serine binding. 261–263 (RSE) lines the ATP pocket. An L-serine-binding site is contributed by Glu284. An ATP-binding site is contributed by 348–351 (EISS). Ser384 serves as a coordination point for L-serine.

This sequence belongs to the class-II aminoacyl-tRNA synthetase family. Type-1 seryl-tRNA synthetase subfamily. In terms of assembly, homodimer. The tRNA molecule binds across the dimer.

It localises to the cytoplasm. It catalyses the reaction tRNA(Ser) + L-serine + ATP = L-seryl-tRNA(Ser) + AMP + diphosphate + H(+). It carries out the reaction tRNA(Sec) + L-serine + ATP = L-seryl-tRNA(Sec) + AMP + diphosphate + H(+). It functions in the pathway aminoacyl-tRNA biosynthesis; selenocysteinyl-tRNA(Sec) biosynthesis; L-seryl-tRNA(Sec) from L-serine and tRNA(Sec): step 1/1. Functionally, catalyzes the attachment of serine to tRNA(Ser). Is also able to aminoacylate tRNA(Sec) with serine, to form the misacylated tRNA L-seryl-tRNA(Sec), which will be further converted into selenocysteinyl-tRNA(Sec). This Streptococcus pyogenes serotype M2 (strain MGAS10270) protein is Serine--tRNA ligase.